A 209-amino-acid chain; its full sequence is Cytidylate kinase (209 aa).

7 to 15 (GPAASGKGT) serves as a coordination point for ATP.

This sequence belongs to the cytidylate kinase family. Type 1 subfamily.

Its subcellular location is the cytoplasm. It carries out the reaction CMP + ATP = CDP + ADP. The catalysed reaction is dCMP + ATP = dCDP + ADP. This Afipia carboxidovorans (strain ATCC 49405 / DSM 1227 / KCTC 32145 / OM5) (Oligotropha carboxidovorans) protein is Cytidylate kinase.